A 164-amino-acid polypeptide reads, in one-letter code: Glycine cleavage system H protein, mitochondrial (164 aa).

Residues methionine 1 to phenylalanine 34 constitute a mitochondrion transit peptide. The 83-residue stretch at valine 56–lysine 138 folds into the Lipoyl-binding domain. At lysine 97 the chain carries N6-lipoyllysine.

It belongs to the GcvH family. The glycine cleavage system is composed of four proteins: P, T, L and H. The cofactor is (R)-lipoate.

It is found in the mitochondrion. In terms of biological role, the glycine cleavage system catalyzes the degradation of glycine. The H protein shuttles the methylamine group of glycine from the P protein to the T protein. This is Glycine cleavage system H protein, mitochondrial (GDCSH) from Oryza sativa subsp. indica (Rice).